Reading from the N-terminus, the 299-residue chain is Regucalcin (299 aa).

Residue glutamate 18 coordinates a divalent metal cation. The substrate site is built by arginine 101, asparagine 103, and glutamate 121. Residues asparagine 154 and aspartate 204 each contribute to the a divalent metal cation site. Aspartate 204 (proton donor/acceptor) is an active-site residue. N6-succinyllysine occurs at positions 244 and 253.

It belongs to the SMP-30/CGR1 family. As to quaternary structure, monomer. The cofactor is Zn(2+). Mn(2+) is required as a cofactor. Ca(2+) serves as cofactor. It depends on Mg(2+) as a cofactor.

The protein localises to the cytoplasm. The enzyme catalyses D-glucono-1,5-lactone + H2O = D-gluconate + H(+). Its pathway is cofactor biosynthesis; L-ascorbate biosynthesis via UDP-alpha-D-glucuronate pathway; L-ascorbate from UDP-alpha-D-glucuronate: step 3/4. Its function is as follows. Gluconolactonase with low activity towards other sugar lactones, including gulonolactone and galactonolactone. Catalyzes a key step in ascorbic acid (vitamin C) biosynthesis. Can also hydrolyze diisopropyl phosphorofluoridate and phenylacetate (in vitro). Calcium-binding protein. Modulates Ca(2+) signaling, and Ca(2+)-dependent cellular processes and enzyme activities. The sequence is that of Regucalcin (RGN) from Bos taurus (Bovine).